The chain runs to 165 residues: SPbeta prophage-derived uncharacterized protein YorR (165 aa).

The polypeptide is SPbeta prophage-derived uncharacterized protein YorR (yorR) (Bacillus subtilis (strain 168)).